Reading from the N-terminus, the 436-residue chain is Trigger factor (436 aa).

One can recognise a PPIase FKBP-type domain in the interval 163-248; sequence GDRVTIDFEG…VKKIEAAHLP (86 aa).

Belongs to the FKBP-type PPIase family. Tig subfamily.

The protein resides in the cytoplasm. It catalyses the reaction [protein]-peptidylproline (omega=180) = [protein]-peptidylproline (omega=0). Its function is as follows. Involved in protein export. Acts as a chaperone by maintaining the newly synthesized protein in an open conformation. Functions as a peptidyl-prolyl cis-trans isomerase. The chain is Trigger factor from Polaromonas naphthalenivorans (strain CJ2).